Reading from the N-terminus, the 370-residue chain is MPARPIPVPLLALALAAALAVPSPAAAARVKELADVVGVRENALYGYGLVVGLAGTGDSERVLFTQQSVAGMLGRLGIRIDPKDVRARNVAAVMVTARLPPFARPGTRIDVAVASMGNARSLAGGLLLVTPLAGGDGKVYAVGQGPVQVAGYDAGAGGAELRKNTPTSGRVAGGAAVERAVDFALGQAPLVLALRRPDLTTASRLAAAVNAKLGAGTARAVDPAAVELSPPAARKDDVVGFLAEIELLEVEADQRARVVVSERTGTVVAGEGVRLRPVAVAHGGLQVRVQRDPAVSQPAPFGAGRTVEATRDRAAATEAAGGVVALPATASVQDLARALDLLGASPRDLVAVLEAIRAAGALDAELEVLE.

Positions 1–27 (MPARPIPVPLLALALAAALAVPSPAAA) are cleaved as a signal peptide.

It belongs to the FlgI family. In terms of assembly, the basal body constitutes a major portion of the flagellar organelle and consists of four rings (L,P,S, and M) mounted on a central rod.

The protein resides in the periplasm. It is found in the bacterial flagellum basal body. Functionally, assembles around the rod to form the L-ring and probably protects the motor/basal body from shearing forces during rotation. The protein is Flagellar P-ring protein of Anaeromyxobacter sp. (strain K).